Consider the following 371-residue polypeptide: Ferrochelatase (371 aa).

Fe cation contacts are provided by His218 and Glu299.

This sequence belongs to the ferrochelatase family.

It localises to the cytoplasm. The enzyme catalyses heme b + 2 H(+) = protoporphyrin IX + Fe(2+). The protein operates within porphyrin-containing compound metabolism; protoheme biosynthesis; protoheme from protoporphyrin-IX: step 1/1. Catalyzes the ferrous insertion into protoporphyrin IX. The sequence is that of Ferrochelatase from Ralstonia nicotianae (strain ATCC BAA-1114 / GMI1000) (Ralstonia solanacearum).